A 272-amino-acid chain; its full sequence is MARLAAFDMDGTLLMPDHHLGEKTLSTLARLRERDITLTFATGRHALEMQHILGALSLDAYLITGNGTRVHSLEGELLHRDDLPADVAELVLYQQWDTRASMHIFNDDGWFTGKENPALLQAFVYSGFRYQIIDVKKMPLGSVTKICFCGDHDDLTRLQIQLYEALGERAHLCFSATDCLEVLPVGCNKGAALTVLTQHLGLSLRDCMAFGDAMNDREMLGSVGSGFIMGNAMPQLRAELPHLPVIGHCRNQAVSHYLTHWLDYPHLPYSPE.

Asp8 acts as the Nucleophile in catalysis. Mg(2+)-binding residues include Asp8, Asp10, and Asp212.

Belongs to the HAD-like hydrolase superfamily. Cof family. The cofactor is Mg(2+).

The catalysed reaction is 4-amino-2-methyl-5-(diphosphooxymethyl)pyrimidine + H2O = 4-amino-2-methyl-5-(phosphooxymethyl)pyrimidine + phosphate + H(+). Its function is as follows. Catalyzes the hydrolysis of 4-amino-2-methyl-5-hydroxymethylpyrimidine pyrophosphate (HMP-PP) to 4-amino-2-methyl-5-hydroxymethylpyrimidine phosphate (HMP-P). In Escherichia coli O6:H1 (strain CFT073 / ATCC 700928 / UPEC), this protein is HMP-PP phosphatase.